Consider the following 216-residue polypeptide: Ribosomal RNA small subunit methyltransferase G (216 aa).

S-adenosyl-L-methionine is bound by residues Gly83, Met88, Val134–Glu135, and Arg149.

This sequence belongs to the methyltransferase superfamily. RNA methyltransferase RsmG family.

It is found in the cytoplasm. The catalysed reaction is guanosine(527) in 16S rRNA + S-adenosyl-L-methionine = N(7)-methylguanosine(527) in 16S rRNA + S-adenosyl-L-homocysteine. Its function is as follows. Specifically methylates the N7 position of guanine in position 527 of 16S rRNA. This Pseudomonas putida (strain GB-1) protein is Ribosomal RNA small subunit methyltransferase G.